The chain runs to 63 residues: Large ribosomal subunit protein bL28 (63 aa).

It belongs to the bacterial ribosomal protein bL28 family.

The sequence is that of Large ribosomal subunit protein bL28 from Alkaliphilus oremlandii (strain OhILAs) (Clostridium oremlandii (strain OhILAs)).